The primary structure comprises 173 residues: Small ribosomal subunit protein uS5 (173 aa).

Residues 16 to 79 form the S5 DRBM domain; that stretch reads LSELLVSVRR…NAAKKNMIRV (64 aa).

Belongs to the universal ribosomal protein uS5 family. In terms of assembly, part of the 30S ribosomal subunit. Contacts proteins S4 and S8.

In terms of biological role, with S4 and S12 plays an important role in translational accuracy. Its function is as follows. Located at the back of the 30S subunit body where it stabilizes the conformation of the head with respect to the body. The protein is Small ribosomal subunit protein uS5 of Anaplasma phagocytophilum (strain HZ).